Consider the following 292-residue polypeptide: 2-(5''-triphosphoribosyl)-3'-dephosphocoenzyme-A synthase (292 aa).

Belongs to the CitG/MdcB family.

The catalysed reaction is 3'-dephospho-CoA + ATP = 2'-(5''-triphospho-alpha-D-ribosyl)-3'-dephospho-CoA + adenine. Functionally, catalyzes the formation of 2-(5''-triphosphoribosyl)-3'-dephosphocoenzyme-A, the precursor of the prosthetic group of the holo-acyl carrier protein (gamma chain) of citrate lyase, from ATP and dephospho-CoA. The sequence is that of 2-(5''-triphosphoribosyl)-3'-dephosphocoenzyme-A synthase from Escherichia coli O7:K1 (strain IAI39 / ExPEC).